A 169-amino-acid polypeptide reads, in one-letter code: 16S rRNA aminocarboxypropyltransferase (169 aa).

Residues threonine 15, valine 65, leucine 88, and threonine 107 each coordinate S-adenosyl-L-methionine.

It belongs to the TDD superfamily. TSR3 family.

It is found in the cytoplasm. The catalysed reaction is an N(1)-methylpseudouridine in rRNA + S-adenosyl-L-methionine = N(1)-methyl-N(3)-[(3S)-3-amino-3-carboxypropyl]pseudouridine in rRNA + S-methyl-5'-thioadenosine + H(+). Its function is as follows. Aminocarboxypropyltransferase that catalyzes the aminocarboxypropyl transfer on pseudouridine corresponding to position 914 in M.jannaschii 16S rRNA. It constitutes the last step in biosynthesis of the hypermodified N1-methyl-N3-(3-amino-3-carboxypropyl) pseudouridine (m1acp3-Psi). This is 16S rRNA aminocarboxypropyltransferase from Methanopyrus kandleri (strain AV19 / DSM 6324 / JCM 9639 / NBRC 100938).